The chain runs to 235 residues: Adenosine 5'-phosphosulfate reductase (235 aa).

[4Fe-4S] cluster-binding residues include Cys-121, Cys-122, Cys-204, and Cys-207. Residue Cys-230 is the Nucleophile; cysteine thiosulfonate intermediate of the active site.

It belongs to the PAPS reductase family. CysH subfamily. It depends on [4Fe-4S] cluster as a cofactor.

Its subcellular location is the cytoplasm. It carries out the reaction [thioredoxin]-disulfide + sulfite + AMP + 2 H(+) = adenosine 5'-phosphosulfate + [thioredoxin]-dithiol. It functions in the pathway sulfur metabolism; hydrogen sulfide biosynthesis; sulfite from sulfate. Its function is as follows. Catalyzes the formation of sulfite from adenosine 5'-phosphosulfate (APS) using thioredoxin as an electron donor. The chain is Adenosine 5'-phosphosulfate reductase from Geobacillus thermodenitrificans (strain NG80-2).